We begin with the raw amino-acid sequence, 198 residues long: Large ribosomal subunit protein bL25 (198 aa).

This sequence belongs to the bacterial ribosomal protein bL25 family. CTC subfamily. In terms of assembly, part of the 50S ribosomal subunit; part of the 5S rRNA/L5/L18/L25 subcomplex. Contacts the 5S rRNA. Binds to the 5S rRNA independently of L5 and L18.

This is one of the proteins that binds to the 5S RNA in the ribosome where it forms part of the central protuberance. The protein is Large ribosomal subunit protein bL25 of Lysinibacillus sphaericus (strain C3-41).